The primary structure comprises 306 residues: MTDSTYDVPRVRTYLQGLQTRIADALGALDGTPLATDVWQRGPEERLRGGGCTRILEGGRVFERAGIGFSDVAGDALPPSASAARPQLAGRGFEALGVSLVLHPRNPYCPTVHMNVRMLIATKPGEAPIFWFGGGMDLTPVYPFEDDARHFHQVCKDALDPFGAELYPRFKTWCDEYFFLKHRNETRGIGGIFFDDFSEPGFERSFEMMQSVGDAFLNAYLPIVERRAALPYGERERDFQAYRRGRYVEFNLVFDRGTLFGLQSGGRTESILMSMPPVANWRYNWQPEPGSPEARLSEFLVPRDWV.

A substrate-binding site is contributed by S99. H103 and H113 together coordinate a divalent metal cation. H113 (proton donor) is an active-site residue. Residue N115–R117 participates in substrate binding. Residues H152 and H182 each coordinate a divalent metal cation. Residues Y247–R282 form an important for dimerization region. G265–R267 is a binding site for substrate.

The protein belongs to the aerobic coproporphyrinogen-III oxidase family. In terms of assembly, homodimer. A divalent metal cation serves as cofactor.

The protein localises to the cytoplasm. It catalyses the reaction coproporphyrinogen III + O2 + 2 H(+) = protoporphyrinogen IX + 2 CO2 + 2 H2O. It participates in porphyrin-containing compound metabolism; protoporphyrin-IX biosynthesis; protoporphyrinogen-IX from coproporphyrinogen-III (O2 route): step 1/1. In terms of biological role, involved in the heme biosynthesis. Catalyzes the aerobic oxidative decarboxylation of propionate groups of rings A and B of coproporphyrinogen-III to yield the vinyl groups in protoporphyrinogen-IX. The polypeptide is Oxygen-dependent coproporphyrinogen-III oxidase (Burkholderia ambifaria (strain MC40-6)).